A 364-amino-acid chain; its full sequence is MTKLKVAVLFGGVSTEHEISIVSAKSIMQNMDKEKYEVIPIGITKEGKWLLYTGKIEDLDSKWTQFSIECFVSPDRTKKALVKVKDNEATFIDIDVVFPVLHGLNGEDGTVQGLLELSGIPYVGCGVLSSAICMDKAFAKKLALLEGIPQGHFLVVYKNEYSAKKDYFIRRIESEFSYPVFVKPANSGSSVGISKAKDREDLVLAIHEAFLYDTKILIEQAINAREIECAVLGNDEVFVSEPGEIIPSREFYSYEAKYIDNSSELIIPARLPKEVTEEIKDLAGRIYKIFECCGMARVDFFVDKDTNKVYFNEVNTIPGFTSISMYPKLMEFSGIPYSQLIDKLISLAIEKNRQKKSIKYSKEG.

One can recognise an ATP-grasp domain in the interval Lys-140–Ser-346. Glu-173–Glu-228 contributes to the ATP binding site. Mg(2+)-binding residues include Asp-299, Glu-313, and Asn-315.

It belongs to the D-alanine--D-alanine ligase family. It depends on Mg(2+) as a cofactor. Requires Mn(2+) as cofactor.

It is found in the cytoplasm. The enzyme catalyses 2 D-alanine + ATP = D-alanyl-D-alanine + ADP + phosphate + H(+). Its pathway is cell wall biogenesis; peptidoglycan biosynthesis. Functionally, cell wall formation. The polypeptide is D-alanine--D-alanine ligase (Caldicellulosiruptor bescii (strain ATCC BAA-1888 / DSM 6725 / KCTC 15123 / Z-1320) (Anaerocellum thermophilum)).